Here is an 89-residue protein sequence, read N- to C-terminus: Large ribosomal subunit protein eL34 (89 aa).

It belongs to the eukaryotic ribosomal protein eL34 family.

The chain is Large ribosomal subunit protein eL34 from Methanococcus maripaludis (strain C6 / ATCC BAA-1332).